A 512-amino-acid chain; its full sequence is Maturase K (512 aa).

It belongs to the intron maturase 2 family. MatK subfamily.

The protein localises to the plastid. It localises to the chloroplast. In terms of biological role, usually encoded in the trnK tRNA gene intron. Probably assists in splicing its own and other chloroplast group II introns. The sequence is that of Maturase K from Lemna minor (Common duckweed).